The sequence spans 223 residues: tRNA (guanine-N(7)-)-methyltransferase (223 aa).

3 residues coordinate S-adenosyl-L-methionine: glutamate 45, glutamate 70, and aspartate 125. Aspartate 125 is a catalytic residue. Residues lysine 129, aspartate 161, and 201-204 (TEYE) contribute to the substrate site.

Belongs to the class I-like SAM-binding methyltransferase superfamily. TrmB family.

The enzyme catalyses guanosine(46) in tRNA + S-adenosyl-L-methionine = N(7)-methylguanosine(46) in tRNA + S-adenosyl-L-homocysteine. The protein operates within tRNA modification; N(7)-methylguanine-tRNA biosynthesis. In terms of biological role, catalyzes the formation of N(7)-methylguanine at position 46 (m7G46) in tRNA. The chain is tRNA (guanine-N(7)-)-methyltransferase from Mesoplasma florum (strain ATCC 33453 / NBRC 100688 / NCTC 11704 / L1) (Acholeplasma florum).